Consider the following 153-residue polypeptide: Ribosome maturation factor RimP (153 aa).

Belongs to the RimP family.

The protein localises to the cytoplasm. Required for maturation of 30S ribosomal subunits. The protein is Ribosome maturation factor RimP of Marinomonas sp. (strain MWYL1).